The primary structure comprises 354 residues: Uroporphyrinogen decarboxylase (354 aa).

Substrate is bound by residues 27-31 (RQAGR), aspartate 77, tyrosine 154, threonine 209, and histidine 327.

This sequence belongs to the uroporphyrinogen decarboxylase family. In terms of assembly, homodimer.

Its subcellular location is the cytoplasm. The catalysed reaction is uroporphyrinogen III + 4 H(+) = coproporphyrinogen III + 4 CO2. Its pathway is porphyrin-containing compound metabolism; protoporphyrin-IX biosynthesis; coproporphyrinogen-III from 5-aminolevulinate: step 4/4. Its function is as follows. Catalyzes the decarboxylation of four acetate groups of uroporphyrinogen-III to yield coproporphyrinogen-III. This Hydrogenovibrio crunogenus (strain DSM 25203 / XCL-2) (Thiomicrospira crunogena) protein is Uroporphyrinogen decarboxylase.